A 29-amino-acid chain; its full sequence is Cuticle protein 36 (29 aa).

Its function is as follows. Component of the cuticle of migratory locust which contains more than 100 different structural proteins. This Locusta migratoria (Migratory locust) protein is Cuticle protein 36.